Here is a 321-residue protein sequence, read N- to C-terminus: Cytochrome c biogenesis protein CcsA (321 aa).

8 helical membrane-spanning segments follow: residues 9–29, 44–64, 71–91, 97–117, 143–163, 227–247, 261–275, and 288–308; these read ILTH…LMTL, GLIA…IYSG, LYES…VPYF, LLST…TSGL, MILS…LLVI, VISL…VWAN, TWAF…IYLH, and AIVA…VNLL.

The protein belongs to the CcmF/CycK/Ccl1/NrfE/CcsA family. As to quaternary structure, may interact with Ccs1.

The protein localises to the plastid. The protein resides in the chloroplast thylakoid membrane. Required during biogenesis of c-type cytochromes (cytochrome c6 and cytochrome f) at the step of heme attachment. This Nandina domestica (Heavenly bamboo) protein is Cytochrome c biogenesis protein CcsA.